A 353-amino-acid polypeptide reads, in one-letter code: Photosystem II protein D1 (353 aa).

Residue T2 is modified to N-acetylthreonine. T2 bears the Phosphothreonine mark. 3 helical membrane passes run 29–46 (YIGW…TATS), 118–133 (HFLL…EWEL), and 142–156 (WIAV…AAAA). H118 contributes to the chlorophyll a binding site. Position 126 (Y126) interacts with pheophytin a. [CaMn4O5] cluster-binding residues include D170 and E189. The helical transmembrane segment at 197–218 (FHMLGVAGVFGGSLFSAMHGSL) threads the bilayer. H198 is a chlorophyll a binding site. A quinone contacts are provided by residues H215 and 264–265 (SF). H215 serves as a coordination point for Fe cation. A Fe cation-binding site is contributed by H272. The helical transmembrane segment at 274–288 (FLAAWPVVGIWFTAL) threads the bilayer. The [CaMn4O5] cluster site is built by H332, E333, D342, and A344. The propeptide occupies 345-353 (SVDAPSING).

Belongs to the reaction center PufL/M/PsbA/D family. In terms of assembly, PSII is composed of 1 copy each of membrane proteins PsbA, PsbB, PsbC, PsbD, PsbE, PsbF, PsbH, PsbI, PsbJ, PsbK, PsbL, PsbM, PsbT, PsbX, PsbY, PsbZ, Psb30/Ycf12, at least 3 peripheral proteins of the oxygen-evolving complex and a large number of cofactors. It forms dimeric complexes. Requires The D1/D2 heterodimer binds P680, chlorophylls that are the primary electron donor of PSII, and subsequent electron acceptors. It shares a non-heme iron and each subunit binds pheophytin, quinone, additional chlorophylls, carotenoids and lipids. D1 provides most of the ligands for the Mn4-Ca-O5 cluster of the oxygen-evolving complex (OEC). There is also a Cl(-1) ion associated with D1 and D2, which is required for oxygen evolution. The PSII complex binds additional chlorophylls, carotenoids and specific lipids. as cofactor. In terms of processing, tyr-161 forms a radical intermediate that is referred to as redox-active TyrZ, YZ or Y-Z. C-terminally processed by CTPA; processing is essential to allow assembly of the oxygen-evolving complex and thus photosynthetic growth.

Its subcellular location is the plastid. The protein localises to the chloroplast thylakoid membrane. It catalyses the reaction 2 a plastoquinone + 4 hnu + 2 H2O = 2 a plastoquinol + O2. Photosystem II (PSII) is a light-driven water:plastoquinone oxidoreductase that uses light energy to abstract electrons from H(2)O, generating O(2) and a proton gradient subsequently used for ATP formation. It consists of a core antenna complex that captures photons, and an electron transfer chain that converts photonic excitation into a charge separation. The D1/D2 (PsbA/PsbD) reaction center heterodimer binds P680, the primary electron donor of PSII as well as several subsequent electron acceptors. The sequence is that of Photosystem II protein D1 from Adiantum capillus-veneris (Maidenhair fern).